The primary structure comprises 172 residues: 3-hydroxydecanoyl-[acyl-carrier-protein] dehydratase (172 aa).

His-71 is an active-site residue.

This sequence belongs to the thioester dehydratase family. FabA subfamily. In terms of assembly, homodimer.

Its subcellular location is the cytoplasm. The catalysed reaction is a (3R)-hydroxyacyl-[ACP] = a (2E)-enoyl-[ACP] + H2O. It catalyses the reaction (3R)-hydroxydecanoyl-[ACP] = (2E)-decenoyl-[ACP] + H2O. It carries out the reaction (2E)-decenoyl-[ACP] = (3Z)-decenoyl-[ACP]. The protein operates within lipid metabolism; fatty acid biosynthesis. Its function is as follows. Necessary for the introduction of cis unsaturation into fatty acids. Catalyzes the dehydration of (3R)-3-hydroxydecanoyl-ACP to E-(2)-decenoyl-ACP and then its isomerization to Z-(3)-decenoyl-ACP. Can catalyze the dehydratase reaction for beta-hydroxyacyl-ACPs with saturated chain lengths up to 16:0, being most active on intermediate chain length. This Escherichia coli O127:H6 (strain E2348/69 / EPEC) protein is 3-hydroxydecanoyl-[acyl-carrier-protein] dehydratase.